Consider the following 354-residue polypeptide: Glyceraldehyde-3-phosphate dehydrogenase (354 aa).

NAD(+)-binding positions include 11 to 12 and glycine 108; that span reads TI. 137 to 139 contacts D-glyceraldehyde 3-phosphate; it reads SCN. The Nucleophile role is filled by cysteine 138. Residue arginine 166 participates in NAD(+) binding. 192–193 contacts D-glyceraldehyde 3-phosphate; the sequence is HG. Glutamine 299 is an NAD(+) binding site.

The protein belongs to the glyceraldehyde-3-phosphate dehydrogenase family. In terms of assembly, homotetramer.

The protein localises to the cytoplasm. The catalysed reaction is D-glyceraldehyde 3-phosphate + phosphate + NADP(+) = (2R)-3-phospho-glyceroyl phosphate + NADPH + H(+). The enzyme catalyses D-glyceraldehyde 3-phosphate + phosphate + NAD(+) = (2R)-3-phospho-glyceroyl phosphate + NADH + H(+). It participates in carbohydrate degradation; glycolysis; pyruvate from D-glyceraldehyde 3-phosphate: step 1/5. In Haloarcula marismortui (strain ATCC 43049 / DSM 3752 / JCM 8966 / VKM B-1809) (Halobacterium marismortui), this protein is Glyceraldehyde-3-phosphate dehydrogenase.